A 254-amino-acid polypeptide reads, in one-letter code: Leucyl/phenylalanyl-tRNA--protein transferase (254 aa).

This sequence belongs to the L/F-transferase family.

It is found in the cytoplasm. The catalysed reaction is N-terminal L-lysyl-[protein] + L-leucyl-tRNA(Leu) = N-terminal L-leucyl-L-lysyl-[protein] + tRNA(Leu) + H(+). It carries out the reaction N-terminal L-arginyl-[protein] + L-leucyl-tRNA(Leu) = N-terminal L-leucyl-L-arginyl-[protein] + tRNA(Leu) + H(+). The enzyme catalyses L-phenylalanyl-tRNA(Phe) + an N-terminal L-alpha-aminoacyl-[protein] = an N-terminal L-phenylalanyl-L-alpha-aminoacyl-[protein] + tRNA(Phe). Its function is as follows. Functions in the N-end rule pathway of protein degradation where it conjugates Leu, Phe and, less efficiently, Met from aminoacyl-tRNAs to the N-termini of proteins containing an N-terminal arginine or lysine. This Burkholderia lata (strain ATCC 17760 / DSM 23089 / LMG 22485 / NCIMB 9086 / R18194 / 383) protein is Leucyl/phenylalanyl-tRNA--protein transferase.